A 372-amino-acid chain; its full sequence is Glutamate 5-kinase (372 aa).

ATP is bound at residue Lys-6. Positions 46, 133, and 145 each coordinate substrate. ATP-binding positions include 165–166 (TD) and 207–213 (TGGMYTK). Residues 272–350 (SGRLFIDEGA…HEIEKILGYK (79 aa)) enclose the PUA domain.

Belongs to the glutamate 5-kinase family.

It localises to the cytoplasm. The enzyme catalyses L-glutamate + ATP = L-glutamyl 5-phosphate + ADP. It functions in the pathway amino-acid biosynthesis; L-proline biosynthesis; L-glutamate 5-semialdehyde from L-glutamate: step 1/2. Catalyzes the transfer of a phosphate group to glutamate to form L-glutamate 5-phosphate. In Thermoanaerobacter pseudethanolicus (strain ATCC 33223 / 39E) (Clostridium thermohydrosulfuricum), this protein is Glutamate 5-kinase.